The primary structure comprises 213 residues: CDP-diacylglycerol--inositol 3-phosphatidyltransferase (213 aa).

Residues 1-5 are Cytoplasmic-facing; the sequence is MPEEN. A helical membrane pass occupies residues 6-26; sequence IFLFVPNLIGYARIVFAIISF. Tyrosine 27 is a topological domain (lumenal). The helical transmembrane segment at 28–48 threads the bilayer; sequence FMPCCPFTASSFYLLSGLLDA. 2 residues coordinate Mg(2+): aspartate 47 and aspartate 50. The Cytoplasmic portion of the chain corresponds to 49 to 73; it reads FDGHAARALNQGTRFGAMLDMLTDR. Residues glycine 51, arginine 55, and threonine 61 each contribute to the a CDP-1,2-diacyl-sn-glycerol site. Mg(2+)-binding residues include aspartate 68 and aspartate 72. The active-site Proton acceptor is the aspartate 72. The helical transmembrane segment at 74-94 threads the bilayer; that stretch reads CATMCLLVNLALLYPRATLLF. A topological domain (lumenal) is located at residue glutamine 95. The chain crosses the membrane as a helical span at residues 96–116; that stretch reads LSMSLDVASHWLHLHSSVVRG. Topologically, residues 117–139 are cytoplasmic; that stretch reads SESHKMIDLSGNPVLRIYYTSRP. The helical transmembrane segment at 140–160 threads the bilayer; that stretch reads ALFTLCAGNELFYCLLYLFNF. Residues 161–174 lie on the Lumenal side of the membrane; that stretch reads SEGPLVGSVGLFRM. The helical transmembrane segment at 175-195 threads the bilayer; that stretch reads GLWVTAPIALLKSVISVIHLI. Residues 196-213 are Cytoplasmic-facing; that stretch reads TAARNMAALDAADRAKKK.

Belongs to the CDP-alcohol phosphatidyltransferase class-I family. Mn(2+) serves as cofactor. Mg(2+) is required as a cofactor.

It is found in the endoplasmic reticulum membrane. Its subcellular location is the cell membrane. It catalyses the reaction a CDP-1,2-diacyl-sn-glycerol + myo-inositol = a 1,2-diacyl-sn-glycero-3-phospho-(1D-myo-inositol) + CMP + H(+). Functionally, catalyzes the biosynthesis of phosphatidylinositol (PtdIns) as well as PtdIns:inositol exchange reaction. May thus act to reduce an excessive cellular PtdIns content. The exchange activity is due to the reverse reaction of PtdIns synthase and is dependent on CMP, which is tightly bound to the enzyme. The protein is CDP-diacylglycerol--inositol 3-phosphatidyltransferase of Mus musculus (Mouse).